An 887-amino-acid polypeptide reads, in one-letter code: 3-hydroxy-3-methylglutaryl-coenzyme A reductase (887 aa).

Topologically, residues 1 to 9 (MLSRLFRMH) are cytoplasmic. The chain crosses the membrane as a helical span at residues 10 to 39 (GLFVASHPWEVIVGTVTLTICMMSMNMFTG). Topologically, residues 40-56 (NNKICGWNYECPKFEED) are lumenal. Residues 57–78 (VLSSDIIILTITRCIAILYIYF) form a helical membrane-spanning segment. Residues 61–218 (DIIILTITRC…MTFFPACVSL (158 aa)) form the SSD domain. The INSIG-binding motif motif lies at 75–78 (YIYF). The Cytoplasmic portion of the chain corresponds to 79–89 (QFQNLRQLGSK). A Glycyl lysine isopeptide (Lys-Gly) (interchain with G-Cter in ubiquitin) cross-link involves residue Lys89. Residues 90–114 (YILGIAGLFTIFSSFVFSTVVIHFL) form a helical membrane-spanning segment. Residues 115 to 123 (DKELTGLNE) lie on the Lumenal side of the membrane. Residues 124 to 149 (ALPFFLLLIDLSRASALAKFALSSNS) traverse the membrane as a helical segment. Over 150–159 (QDEVRENIAR) the chain is Cytoplasmic. Residues 160 to 187 (GMAILGPTFTLDALVECLVIGVGTMSGV) traverse the membrane as a helical segment. At 188 to 191 (RQLE) the chain is on the lumenal side. The chain crosses the membrane as a helical span at residues 192 to 220 (IMCCFGCMSVLANYFVFMTFFPACVSLVL). The Cytoplasmic segment spans residues 221–248 (ELSRESREGRPIWQLSHFARVLEEEENK). Lys248 participates in a covalent cross-link: Glycyl lysine isopeptide (Lys-Gly) (interchain with G-Cter in ubiquitin). A helical membrane pass occupies residues 249–275 (PNPVTQRVKMIMSLGLVLVHAHSRWIA). Topologically, residues 276–314 (DPSPQNSTAEQSKVSLGLAEDVSKRIEPSVSLWQFYLSK) are lumenal. Asn281 carries N-linked (GlcNAc...) asparagine glycosylation. Residues 315–339 (MISMDIEQVITLSLALLLAVKYIFF) traverse the membrane as a helical segment. Topologically, residues 340-887 (EQAETESTLS…LQGTCTKKAA (548 aa)) are cytoplasmic. Catalysis depends on charge relay system residues Glu558, Lys690, and Asp766. His865 acts as the Proton donor in catalysis. At Ser871 the chain carries Phosphoserine; by AMPK.

Belongs to the HMG-CoA reductase family. In terms of assembly, homotetramer. Homodimer. Interacts (via its SSD) with INSIG1; the interaction, accelerated by sterols, leads to the recruitment of HMGCR to AMFR/gp78 for its ubiquitination by the sterol-mediated ERAD pathway. Interacts with UBIAD1. Post-translationally, undergoes sterol-mediated ubiquitination and ER-associated degradation (ERAD). Accumulation of sterols in the endoplasmic reticulum (ER) membrane, triggers binding of the reductase to the ER membrane protein INSIG1 or INSIG2. The INSIG1 binding leads to the recruitment of the ubiquitin ligase, AMFR/gp78, RNF139 or RNF145, initiating ubiquitination of the reductase. The ubiquitinated reductase is then extracted from the ER membrane and delivered to cytosolic 26S proteosomes by a mechanism probably mediated by the ATPase Valosin-containing protein VCP/p97. The INSIG2-binding leads to the recruitment of the ubiquitin ligase RNF139, initiating ubiquitination of the reductase. Lys-248 is the main site of ubiquitination. Ubiquitination is enhanced by the presence of a geranylgeranylated protein. N-glycosylated. Deglycosylated by NGLY1 on release from the endoplasmic reticulum (ER) in a sterol-mediated manner. In terms of processing, phosphorylated. Phosphorylation at Ser-871 reduces the catalytic activity.

It is found in the endoplasmic reticulum membrane. The protein resides in the peroxisome membrane. The catalysed reaction is (R)-mevalonate + 2 NADP(+) + CoA = (3S)-3-hydroxy-3-methylglutaryl-CoA + 2 NADPH + 2 H(+). It participates in metabolic intermediate biosynthesis; (R)-mevalonate biosynthesis; (R)-mevalonate from acetyl-CoA: step 3/3. Its activity is regulated as follows. Regulated by a negative feedback mechanism through sterols and non-sterol metabolites derived from mevalonate. Phosphorylation at Ser-871 down-regulates the catalytic activity. Catalyzes the conversion of (3S)-hydroxy-3-methylglutaryl-CoA (HMG-CoA) to mevalonic acid, the rate-limiting step in the synthesis of cholesterol and other isoprenoids, thus plays a critical role in cellular cholesterol homeostasis. The chain is 3-hydroxy-3-methylglutaryl-coenzyme A reductase (Hmgcr) from Rattus norvegicus (Rat).